Consider the following 450-residue polypeptide: Tubulin alpha chain (450 aa).

Position 11 (glutamine 11) interacts with GTP. Lysine 40 is modified (N6-acetyllysine). GTP-binding residues include glutamate 71, serine 140, glycine 144, threonine 145, threonine 179, asparagine 206, and asparagine 228. Position 71 (glutamate 71) interacts with Mg(2+). Glutamate 254 is a catalytic residue.

The protein belongs to the tubulin family. Dimer of alpha and beta chains. A typical microtubule is a hollow water-filled tube with an outer diameter of 25 nm and an inner diameter of 15 nM. Alpha-beta heterodimers associate head-to-tail to form protofilaments running lengthwise along the microtubule wall with the beta-tubulin subunit facing the microtubule plus end conferring a structural polarity. Microtubules usually have 13 protofilaments but different protofilament numbers can be found in some organisms and specialized cells. Mg(2+) is required as a cofactor. Post-translationally, acetylation of alpha chains at Lys-40 stabilizes microtubules and affects affinity and processivity of microtubule motors. This modification has a role in multiple cellular functions, ranging from cell motility, cell cycle progression or cell differentiation to intracellular trafficking and signaling.

The protein resides in the cytoplasm. Its subcellular location is the cytoskeleton. The catalysed reaction is GTP + H2O = GDP + phosphate + H(+). Its function is as follows. Tubulin is the major constituent of microtubules, a cylinder consisting of laterally associated linear protofilaments composed of alpha- and beta-tubulin heterodimers. Microtubules grow by the addition of GTP-tubulin dimers to the microtubule end, where a stabilizing cap forms. Below the cap, tubulin dimers are in GDP-bound state, owing to GTPase activity of alpha-tubulin. In Euplotoides octocarinatus (Freshwater ciliate), this protein is Tubulin alpha chain.